Here is a 628-residue protein sequence, read N- to C-terminus: tRNA(Thr) (cytosine(32)-N(3))-methyltransferase (628 aa).

The span at 1 to 18 (MGVADLIKKFESISKEEG) shows a compositional bias: basic and acidic residues. Disordered regions lie at residues 1–106 (MGVA…GENA), 124–269 (AEVL…VNDL), and 302–331 (NIAH…TEGS). Residues 22–31 (VDTNSSSKPL) show a composition bias toward polar residues. Residues 32 to 42 (KSNDETKELHQ) show a composition bias toward basic and acidic residues. Acidic residues predominate over residues 53–62 (DVNEEFENEP). Serine 93 is modified (phosphoserine). Positions 132-146 (EESDAIQEGVAEETE) are enriched in acidic residues. Residue threonine 150 is modified to Phosphothreonine. The span at 173 to 186 (PAEEYSQSEEDADI) shows a compositional bias: acidic residues. The span at 196–207 (NAENASQQANDG) shows a compositional bias: polar residues. Residues 215 to 230 (KNKKKKNKKKNKKKRN) show a composition bias toward basic residues. Polar residues predominate over residues 231 to 240 (GNVNTNANVD). A phosphoserine mark is found at serine 321 and serine 326. Threonine 347 carries the post-translational modification Phosphothreonine. S-adenosyl-L-methionine is bound by residues tryptophan 399, tyrosine 403, glycine 441, aspartate 466, aspartate 492, leucine 493, and isoleucine 515.

Belongs to the methyltransferase superfamily. METL family. In terms of assembly, interacts with SES1.

It is found in the cytoplasm. Its subcellular location is the cytoskeleton. It carries out the reaction cytidine(32) in tRNA(Thr) + S-adenosyl-L-methionine = N(3)-methylcytidine(32) in tRNA(Thr) + S-adenosyl-L-homocysteine + H(+). The enzyme catalyses cytidine(32) in tRNA(Ser) + S-adenosyl-L-methionine = N(3)-methylcytidine(32) in tRNA(Ser) + S-adenosyl-L-homocysteine + H(+). Its function is as follows. S-adenosyl-L-methionine-dependent methyltransferase that mediates N(3)-methylcytidine modification of residue 32 of the tRNA anticodon loop of tRNA(Thr) and tRNA(Ser). N(3)-methylcytidine methylation of tRNA(Thr) requires the N6-threonylcarbamoylation of tRNA (t6A37) by the EKC/KEOPS complex as prerequisite. N(3)-methylcytidine methylation of tRNA(Ser) requires the formation of N(6)-dimethylallyladenosine(37) (i6A37) by MOD5 as prerequisite. Methylation of tRNA(Ser) is also stimulated by SES1. Binds F-actin and shows weak F-actin cross-linking activity. In Saccharomyces cerevisiae (strain ATCC 204508 / S288c) (Baker's yeast), this protein is tRNA(Thr) (cytosine(32)-N(3))-methyltransferase (ABP140).